The sequence spans 418 residues: Putative ion-transport protein YfeO (418 aa).

The next 12 helical transmembrane spans lie at 10-30, 54-74, 99-119, 120-140, 149-169, 186-206, 223-243, 258-278, 300-320, 322-342, 343-363, and 371-391; these read LLLS…LIVV, DSPI…GLVI, ALPG…SLGP, EHPI…RLLP, ILAS…AALI, LFAP…FFHP, ILSG…AVWC, VLVL…GGPV, DYFL…ASGF, GGRI…LHEH, VPAV…VLVV, and LFMA…CIVM.

It belongs to the chloride channel (TC 2.A.49) family.

The protein resides in the cell membrane. The protein is Putative ion-transport protein YfeO of Shigella sonnei (strain Ss046).